The primary structure comprises 485 residues: Pre-glycoprotein polyprotein GP complex (485 aa).

The N-myristoyl glycine; by host moiety is linked to residue glycine 2. The Extracellular segment spans residues glycine 2–glutamate 17. Residues alanine 18–lysine 33 form a helical membrane-spanning segment. The Cytoplasmic segment spans residues glycine 34–serine 58. Residue cysteine 57 participates in Zn(2+) binding. Topologically, residues valine 59–aspartate 424 are extracellular. 4 disulfide bridges follow: cysteine 85–cysteine 225, cysteine 271–cysteine 284, cysteine 293–cysteine 302, and cysteine 356–cysteine 377. Residues asparagine 88, asparagine 128, asparagine 179, and asparagine 218 are each glycosylated (N-linked (GlcNAc...) asparagine; by host). Residues asparagine 357, asparagine 365, asparagine 382, and asparagine 387 are each glycosylated (N-linked (GlcNAc...) asparagine; by host). The chain crosses the membrane as a helical span at residues valine 425 to proline 445. Residues threonine 446–asparagine 485 are Cytoplasmic-facing. Histidine 447, histidine 449, cysteine 455, histidine 459, cysteine 467, and cysteine 469 together coordinate Zn(2+).

Belongs to the arenaviridae GPC protein family. In terms of assembly, interacts with glycoprotein G2. Part of the GP complex (GP-C) together with glycoprotein G1 and glycoprotein G2. The GP-complex interacts with protein Z, which interacts with ribonucleocapsid; these interactions may induce virion budding. Homotrimer; disulfide-linked. In pre-fusion state, G1 homotrimers bind G2 homotrimers via ionic interactions. Part of the GP complex (GP-C) together with glycoprotein G2 and the stable signal peptide. The GP-complex interacts with protein Z, which interacts with ribonucleocapsid; these interactions may induce virion budding. As to quaternary structure, homotrimer. Interacts with the stable signal peptide. In pre-fusion state, G2 homotrimers bind G1 homotrimers via ionic interactions. Part of the GP complex (GP-C) together with glycoprotein G1 and the stable signal peptide. Acidification in the endosome triggers rearrangements, which ultimately leads to a 6 helix bundle formed by the two heptad repeat domains (HR1 and HR2) in post-fusion state. The GP-complex interacts with protein Z, which interacts with ribonucleocapsid; these interactions may induce virion budding. Post-translationally, specific enzymatic cleavages in vivo yield mature proteins. GP-C polyprotein is cleaved in the endoplasmic reticulum by the host protease MBTPS1. Only cleaved glycoprotein is incorporated into virions. The SSP remains stably associated with the GP complex following cleavage by signal peptidase and plays crucial roles in the trafficking of GP through the secretory pathway. In terms of processing, myristoylation is necessary for GP2-mediated fusion activity.

Its subcellular location is the virion membrane. The protein resides in the host endoplasmic reticulum membrane. It localises to the host Golgi apparatus membrane. The protein localises to the host cell membrane. Functions as a cleaved signal peptide that is retained as the third component of the GP complex (GP-C). Helps to stabilize the spike complex in its native conformation. The SSP is required for efficient glycoprotein expression, post-translational maturation cleavage of G1 and G2, glycoprotein transport to the cell surface plasma membrane, formation of infectious virus particles, and acid pH-dependent glycoprotein-mediated cell fusion. Functionally, forms the virion spikes together with glycoprotein G2. The glycoprotein spike trimers are connected to the underlying matrix. Interacts with the host receptor leading to virus endocytosis. In terms of biological role, forms the virion spikes together with glycoprotein G1. The glycoprotein spike trimers are connected to the underlying matrix. Class I viral fusion protein that directs fusion of viral and host endosomal membranes, leading to delivery of the nucleocapsid into the cytoplasm. Membrane fusion is mediated by irreversible conformational changes induced by acidification. The polypeptide is Pre-glycoprotein polyprotein GP complex (Sigmodon hispidus (Hispid cotton rat)).